Consider the following 578-residue polypeptide: Vacuolar protein 8 (578 aa).

9 ARM repeats span residues 58 to 95, 96 to 135, 137 to 176, 178 to 217, 219 to 258, 262 to 301, 303 to 342, 344 to 384, and 428 to 467; these read NRAE…FAEI, TERD…NLAV, ADNK…NLAT, EDNK…NMTH, DDNR…NIAV, NRKR…NLAS, EKYQ…NISI, PLNE…NLAA, and DELK…NLSS.

It belongs to the beta-catenin family.

Its subcellular location is the vacuole membrane. Functions in both vacuole inheritance and protein targeting from the cytoplasm to vacuole. This is Vacuolar protein 8 (vac8) from Aspergillus oryzae (strain ATCC 42149 / RIB 40) (Yellow koji mold).